A 107-amino-acid chain; its full sequence is U1-lycotoxin-Ls1d (107 aa).

A signal peptide spans 1–20 (MMKVLVVVALLVTLISYSSS). Residues 21-41 (EGIDDLEADELLSLMANEQTR) constitute a propeptide that is removed on maturation. Disulfide bonds link C44/C59, C51/C68, C58/C86, and C70/C84.

The protein belongs to the neurotoxin 19 (CSTX) family. 04 (U1-Lctx) subfamily. In terms of tissue distribution, expressed by the venom gland.

The protein resides in the secreted. This Lycosa singoriensis (Wolf spider) protein is U1-lycotoxin-Ls1d.